The following is a 259-amino-acid chain: Diphthine synthase (259 aa).

S-adenosyl-L-methionine-binding positions include Leu-9, Asp-85, Val-88, 113-114, Leu-168, Ala-209, and His-234; that span reads TA.

The protein belongs to the diphthine synthase family. In terms of assembly, homodimer.

The enzyme catalyses 2-[(3S)-amino-3-carboxypropyl]-L-histidyl-[translation elongation factor 2] + 3 S-adenosyl-L-methionine = diphthine-[translation elongation factor 2] + 3 S-adenosyl-L-homocysteine + 3 H(+). The protein operates within protein modification; peptidyl-diphthamide biosynthesis. Its function is as follows. S-adenosyl-L-methionine-dependent methyltransferase that catalyzes the trimethylation of the amino group of the modified target histidine residue in translation elongation factor 2 (EF-2), to form an intermediate called diphthine. The three successive methylation reactions represent the second step of diphthamide biosynthesis. The chain is Diphthine synthase from Haloarcula marismortui (strain ATCC 43049 / DSM 3752 / JCM 8966 / VKM B-1809) (Halobacterium marismortui).